We begin with the raw amino-acid sequence, 257 residues long: 1-acyl-sn-glycerol-3-phosphate acyltransferase (257 aa).

The chain crosses the membrane as a helical span at residues 10–30; that stretch reads VLFYLLLSASAFVWGTLSFFI. The HXXXXD motif motif lies at 82–87; the sequence is HQSTWE. A helical membrane pass occupies residues 105–125; the sequence is ELLYVPFFGWALALLKPIAID.

This sequence belongs to the 1-acyl-sn-glycerol-3-phosphate acyltransferase family.

The protein resides in the cell inner membrane. It catalyses the reaction a 1-acyl-sn-glycero-3-phosphate + an acyl-CoA = a 1,2-diacyl-sn-glycero-3-phosphate + CoA. It participates in phospholipid metabolism; CDP-diacylglycerol biosynthesis; CDP-diacylglycerol from sn-glycerol 3-phosphate: step 2/3. Functionally, converts lysophosphatidic acid (LPA) into phosphatidic acid by incorporating acyl moiety at the 2 position. This chain is 1-acyl-sn-glycerol-3-phosphate acyltransferase, found in Pseudomonas aeruginosa (strain ATCC 15692 / DSM 22644 / CIP 104116 / JCM 14847 / LMG 12228 / 1C / PRS 101 / PAO1).